The primary structure comprises 70 residues: Small ribosomal subunit protein bS21B (70 aa).

It belongs to the bacterial ribosomal protein bS21 family.

The protein is Small ribosomal subunit protein bS21B (rpsU2) of Rhizobium meliloti (strain 1021) (Ensifer meliloti).